The following is a 327-amino-acid chain: Glycerol-3-phosphate dehydrogenase [NAD(P)+] (327 aa).

The NADPH site is built by phenylalanine 13, arginine 34, and lysine 107. The sn-glycerol 3-phosphate site is built by lysine 107 and glycine 135. Alanine 139 is a binding site for NADPH. Residues lysine 190, aspartate 243, serine 253, arginine 254, and asparagine 255 each coordinate sn-glycerol 3-phosphate. Lysine 190 functions as the Proton acceptor in the catalytic mechanism. Arginine 254 is a binding site for NADPH. Residues valine 276 and glutamate 277 each contribute to the NADPH site.

The protein belongs to the NAD-dependent glycerol-3-phosphate dehydrogenase family.

It localises to the cytoplasm. It carries out the reaction sn-glycerol 3-phosphate + NAD(+) = dihydroxyacetone phosphate + NADH + H(+). The enzyme catalyses sn-glycerol 3-phosphate + NADP(+) = dihydroxyacetone phosphate + NADPH + H(+). It participates in membrane lipid metabolism; glycerophospholipid metabolism. Functionally, catalyzes the reduction of the glycolytic intermediate dihydroxyacetone phosphate (DHAP) to sn-glycerol 3-phosphate (G3P), the key precursor for phospholipid synthesis. The protein is Glycerol-3-phosphate dehydrogenase [NAD(P)+] of Rhizobium etli (strain CIAT 652).